The chain runs to 345 residues: S-adenosylmethionine:tRNA ribosyltransferase-isomerase (345 aa).

This sequence belongs to the QueA family. In terms of assembly, monomer.

Its subcellular location is the cytoplasm. The catalysed reaction is 7-aminomethyl-7-carbaguanosine(34) in tRNA + S-adenosyl-L-methionine = epoxyqueuosine(34) in tRNA + adenine + L-methionine + 2 H(+). Its pathway is tRNA modification; tRNA-queuosine biosynthesis. In terms of biological role, transfers and isomerizes the ribose moiety from AdoMet to the 7-aminomethyl group of 7-deazaguanine (preQ1-tRNA) to give epoxyqueuosine (oQ-tRNA). The sequence is that of S-adenosylmethionine:tRNA ribosyltransferase-isomerase from Acinetobacter baumannii (strain AB0057).